The sequence spans 470 residues: Ribulose bisphosphate carboxylase large chain (470 aa).

Positions 118 and 168 each coordinate substrate. Lys-170 (proton acceptor) is an active-site residue. Lys-172 provides a ligand contact to substrate. Residues Lys-196, Asp-198, and Glu-199 each coordinate Mg(2+). Lys-196 carries the post-translational modification N6-carboxylysine. Residue His-289 is the Proton acceptor of the active site. Residues Arg-290, His-322, and Ser-374 each coordinate substrate. The Interacts with RbcX2 motif lies at 459-465 (EIKFEFD).

The protein belongs to the RuBisCO large chain family. Type I subfamily. Heterohexadecamer of 8 large chains and 8 small chains; disulfide-linked. The disulfide link is formed within the large subunit homodimers. Requires Mg(2+) as cofactor. In terms of processing, the disulfide bond which can form in the large chain dimeric partners within the hexadecamer appears to be associated with oxidative stress and protein turnover.

It is found in the carboxysome. The enzyme catalyses 2 (2R)-3-phosphoglycerate + 2 H(+) = D-ribulose 1,5-bisphosphate + CO2 + H2O. It carries out the reaction D-ribulose 1,5-bisphosphate + O2 = 2-phosphoglycolate + (2R)-3-phosphoglycerate + 2 H(+). Its function is as follows. RuBisCO catalyzes two reactions: the carboxylation of D-ribulose 1,5-bisphosphate, the primary event in carbon dioxide fixation, as well as the oxidative fragmentation of the pentose substrate in the photorespiration process. Both reactions occur simultaneously and in competition at the same active site. The sequence is that of Ribulose bisphosphate carboxylase large chain from Picosynechococcus sp. (strain ATCC 27264 / PCC 7002 / PR-6) (Agmenellum quadruplicatum).